The following is a 382-amino-acid chain: Lipid-A-disaccharide synthase (382 aa).

This sequence belongs to the LpxB family.

It carries out the reaction a lipid X + a UDP-2-N,3-O-bis[(3R)-3-hydroxyacyl]-alpha-D-glucosamine = a lipid A disaccharide + UDP + H(+). It functions in the pathway bacterial outer membrane biogenesis; LPS lipid A biosynthesis. Functionally, condensation of UDP-2,3-diacylglucosamine and 2,3-diacylglucosamine-1-phosphate to form lipid A disaccharide, a precursor of lipid A, a phosphorylated glycolipid that anchors the lipopolysaccharide to the outer membrane of the cell. This chain is Lipid-A-disaccharide synthase, found in Dechloromonas aromatica (strain RCB).